The sequence spans 117 residues: Photosystem II reaction center Psb28 protein (117 aa).

This sequence belongs to the Psb28 family. In terms of assembly, part of the photosystem II complex.

It localises to the cellular thylakoid membrane. This chain is Photosystem II reaction center Psb28 protein, found in Prochlorococcus marinus (strain MIT 9211).